Here is a 252-residue protein sequence, read N- to C-terminus: Sugar fermentation stimulation protein homolog (252 aa).

This sequence belongs to the SfsA family.

The chain is Sugar fermentation stimulation protein homolog from Picosynechococcus sp. (strain ATCC 27264 / PCC 7002 / PR-6) (Agmenellum quadruplicatum).